The following is a 152-amino-acid chain: Large ribosomal subunit protein uL30 (152 aa).

The protein belongs to the universal ribosomal protein uL30 family. In terms of assembly, part of the 50S ribosomal subunit.

This chain is Large ribosomal subunit protein uL30, found in Methanosphaera stadtmanae (strain ATCC 43021 / DSM 3091 / JCM 11832 / MCB-3).